The sequence spans 317 residues: 4-hydroxy-3-methylbut-2-enyl diphosphate reductase (317 aa).

Residue Cys-12 coordinates [4Fe-4S] cluster. (2E)-4-hydroxy-3-methylbut-2-enyl diphosphate-binding residues include His-41 and His-74. 2 residues coordinate dimethylallyl diphosphate: His-41 and His-74. 2 residues coordinate isopentenyl diphosphate: His-41 and His-74. Cys-97 contacts [4Fe-4S] cluster. His-125 serves as a coordination point for (2E)-4-hydroxy-3-methylbut-2-enyl diphosphate. His-125 serves as a coordination point for dimethylallyl diphosphate. His-125 serves as a coordination point for isopentenyl diphosphate. Glu-127 (proton donor) is an active-site residue. (2E)-4-hydroxy-3-methylbut-2-enyl diphosphate is bound at residue Thr-168. Cys-198 provides a ligand contact to [4Fe-4S] cluster. Residues Ser-226, Ser-227, Asn-228, and Ser-270 each coordinate (2E)-4-hydroxy-3-methylbut-2-enyl diphosphate. Ser-226, Ser-227, Asn-228, and Ser-270 together coordinate dimethylallyl diphosphate. Isopentenyl diphosphate-binding residues include Ser-226, Ser-227, Asn-228, and Ser-270.

This sequence belongs to the IspH family. Homodimer. Requires [4Fe-4S] cluster as cofactor.

It carries out the reaction isopentenyl diphosphate + 2 oxidized [2Fe-2S]-[ferredoxin] + H2O = (2E)-4-hydroxy-3-methylbut-2-enyl diphosphate + 2 reduced [2Fe-2S]-[ferredoxin] + 2 H(+). The enzyme catalyses dimethylallyl diphosphate + 2 oxidized [2Fe-2S]-[ferredoxin] + H2O = (2E)-4-hydroxy-3-methylbut-2-enyl diphosphate + 2 reduced [2Fe-2S]-[ferredoxin] + 2 H(+). It participates in isoprenoid biosynthesis; dimethylallyl diphosphate biosynthesis; dimethylallyl diphosphate from (2E)-4-hydroxy-3-methylbutenyl diphosphate: step 1/1. Its pathway is isoprenoid biosynthesis; isopentenyl diphosphate biosynthesis via DXP pathway; isopentenyl diphosphate from 1-deoxy-D-xylulose 5-phosphate: step 6/6. In terms of biological role, catalyzes the conversion of 1-hydroxy-2-methyl-2-(E)-butenyl 4-diphosphate (HMBPP) into a mixture of isopentenyl diphosphate (IPP) and dimethylallyl diphosphate (DMAPP). Acts in the terminal step of the DOXP/MEP pathway for isoprenoid precursor biosynthesis. In Yersinia enterocolitica serotype O:8 / biotype 1B (strain NCTC 13174 / 8081), this protein is 4-hydroxy-3-methylbut-2-enyl diphosphate reductase.